Reading from the N-terminus, the 544-residue chain is CTP synthase (544 aa).

The segment at 1-266 (MIRYIFITGG…DSEVLSHFGI (266 aa)) is amidoligase domain. Ser-13 lines the CTP pocket. Ser-13 contacts UTP. ATP contacts are provided by residues 14 to 19 (SLGKGI) and Asp-71. Residues Asp-71 and Glu-140 each coordinate Mg(2+). Residues 147–149 (DIE), 187–192 (KTKPTQ), and Lys-223 contribute to the CTP site. UTP is bound by residues 187-192 (KTKPTQ) and Lys-223. Position 239 to 241 (239 to 241 (RDV)) interacts with ATP. In terms of domain architecture, Glutamine amidotransferase type-1 spans 292–543 (TIGLVGKYTD…IAAAVKQSRL (252 aa)). Position 355 (Gly-355) interacts with L-glutamine. Catalysis depends on Cys-382, which acts as the Nucleophile; for glutamine hydrolysis. Residues 383–386 (YGMQ), Glu-406, and Arg-471 contribute to the L-glutamine site. Active-site residues include His-516 and Glu-518.

The protein belongs to the CTP synthase family. Homotetramer.

It carries out the reaction UTP + L-glutamine + ATP + H2O = CTP + L-glutamate + ADP + phosphate + 2 H(+). It catalyses the reaction L-glutamine + H2O = L-glutamate + NH4(+). The catalysed reaction is UTP + NH4(+) + ATP = CTP + ADP + phosphate + 2 H(+). The protein operates within pyrimidine metabolism; CTP biosynthesis via de novo pathway; CTP from UDP: step 2/2. Its activity is regulated as follows. Allosterically activated by GTP, when glutamine is the substrate; GTP has no effect on the reaction when ammonia is the substrate. The allosteric effector GTP functions by stabilizing the protein conformation that binds the tetrahedral intermediate(s) formed during glutamine hydrolysis. Inhibited by the product CTP, via allosteric rather than competitive inhibition. Its function is as follows. Catalyzes the ATP-dependent amination of UTP to CTP with either L-glutamine or ammonia as the source of nitrogen. Regulates intracellular CTP levels through interactions with the four ribonucleotide triphosphates. In Hyphomonas neptunium (strain ATCC 15444), this protein is CTP synthase.